An 829-amino-acid chain; its full sequence is Genome polyprotein (829 aa).

N-acetylserine; by host is present on serine 2. An interaction with STAT1 region spans residues 2–23; the sequence is STNPKPQRKTKRNTNRRPQDVK. The segment at 2–58 is interaction with EIF2AK2/PKR; it reads STNPKPQRKTKRNTNRRPQDVKFPGGGQIVGGVYLLPRRGPRLGVRATRKTSERSQP. Residues 2–59 form an interaction with DDX3X region; sequence STNPKPQRKTKRNTNRRPQDVKFPGGGQIVGGVYLLPRRGPRLGVRATRKTSERSQPR. Positions 2-75 are disordered; the sequence is STNPKPQRKT…PKARRPKGRN (74 aa). The Cytoplasmic segment spans residues 2–168; that stretch reads STNPKPQRKT…EDGVNYATGN (167 aa). Short sequence motifs (nuclear localization signal) lie at residues 5–13 and 38–43; these read PKPQRKTKR and PRRGPR. Basic residues predominate over residues 7 to 16; it reads PQRKTKRNTN. Residues 32-47 show a composition bias toward low complexity; that stretch reads GGVYLLPRRGPRLGVR. Serine 53 is modified (phosphoserine; by host). Short sequence motifs (nuclear localization signal) lie at residues 58-64 and 66-71; these read PRGRRQP and PKARRP. Residues 58–73 show a composition bias toward basic residues; the sequence is PRGRRQPIPKARRPKG. Position 99 is a phosphoserine; by host (serine 99). The tract at residues 112–152 is important for endoplasmic reticulum and mitochondrial localization; the sequence is PRRRSRNLGKVIDTLTCGFVDLMGYIPLVGAPLRGAARALA. Serine 116 is modified (phosphoserine; by host PKA). Positions 122–173 are interaction with APOA2; the sequence is VIDTLTCGFVDLMGYIPLVGAPLRGAARALAHGVRVLEDGVNYATGNLPGCS. The tract at residues 164-167 is important for lipid droplets localization; it reads YATG. The helical transmembrane segment at 169 to 189 threads the bilayer; sequence LPGCSFSIFLLALLSCLTVPA. A propeptide spans 178–191 (ER anchor for the core protein, removed in mature form by host signal peptidase); it reads LLALLSCLTVPASA. Residues 190 to 358 are Lumenal-facing; it reads SAYQVRNSTG…AGAHWGVLAG (169 aa). Residues asparagine 196, asparagine 209, and asparagine 234 are each glycosylated (N-linked (GlcNAc...) asparagine; by host). Residues 265–296 are important for fusion; sequence LVGSATLCSALYVGDLCGSVFLVGQLFTFSPR. Asparagine 305 is a glycosylation site (N-linked (GlcNAc...) asparagine; by host). Residues 359 to 379 traverse the membrane as a helical segment; the sequence is MAYFSMVGNWAKVLAVLLLFA. Over 380-725 the chain is Lumenal; the sequence is GVDAETHVTG…WEYVVLLFLL (346 aa). The HVR1 stretch occupies residues 385–411; sequence THVTGGAAARSTLQLAGLFQPGAKQNV. Residues asparagine 417, asparagine 423, asparagine 430, and asparagine 448 are each glycosylated (N-linked (GlcNAc...) (high mannose) asparagine; by host). Cystine bridges form between cysteine 429–cysteine 552, cysteine 452–cysteine 459, cysteine 486–cysteine 494, and cysteine 503–cysteine 508. The segment at 474-479 is HVR2; sequence YAGGGG. The tract at residues 480–493 is CD81-binding 1; it reads PDHRPYCWHYPPKP. Asparagine 540 carries an N-linked (GlcNAc...) asparagine; by host glycan. A CD81-binding 2 region spans residues 544-551; it reads PPLGNWFG. An N-linked (GlcNAc...) (high mannose) asparagine; by host glycan is attached at asparagine 556. Cysteine 564 and cysteine 569 are joined by a disulfide. Residue asparagine 576 is glycosylated (N-linked (GlcNAc...) (high mannose) asparagine; by host). 3 cysteine pairs are disulfide-bonded: cysteine 581-cysteine 585, cysteine 597-cysteine 620, and cysteine 607-cysteine 644. 2 N-linked (GlcNAc...) (high mannose) asparagine; by host glycosylation sites follow: asparagine 623 and asparagine 645. Cysteine 652 and cysteine 677 are joined by a disulfide. A PKR/eIF2-alpha phosphorylation homology domain (PePHD) region spans residues 660–671; sequence SELSPLLLSTTQ. Residues 726-746 traverse the membrane as a helical segment; the sequence is LADARVCSCLWMMLLISQAEA. The Lumenal segment spans residues 747-757; it reads ALENLVVLNAA. The chain crosses the membrane as a helical span at residues 758–778; the sequence is SLAGTHGLVSFLVFFCFAWFL. Over 779 to 781 the chain is Cytoplasmic; sequence RGK. The chain crosses the membrane as a helical span at residues 782-803; that stretch reads WVPGAVYALYGMWPLLLLLLAL. The Lumenal segment spans residues 804-813; it reads PQRAYALDTE. A helical transmembrane segment spans residues 814–829; it reads VAASCGGVVLVGLMAL.

It belongs to the hepacivirus polyprotein family. As to quaternary structure, homooligomer. Interacts with E1 (via C-terminus). Interacts with the non-structural protein 5A. Interacts (via N-terminus) with host STAT1 (via SH2 domain); this interaction results in decreased STAT1 phosphorylation and ubiquitin-mediated proteasome-dependent STAT1 degradation, leading to decreased IFN-stimulated gene transcription. Interacts with host STAT3; this interaction constitutively activates STAT3. Interacts with host LTBR receptor. Interacts with host TNFRSF1A receptor and possibly induces apoptosis. Interacts with host HNRPK. Interacts with host YWHAE. Interacts with host UBE3A/E6AP. Interacts with host DDX3X. Interacts with host APOA2. Interacts with host RXRA protein. Interacts with host SP110 isoform 3/Sp110b; this interaction sequesters the transcriptional corepressor SP110 away from the nucleus. Interacts with host CREB3 nuclear transcription protein; this interaction triggers cell transformation. Interacts with host ACY3. Interacts with host C1QR1. Interacts with host RBM24; this interaction, which enhances the interaction of the mature core protein with 5'-UTR, may inhibit viral translation and favor replication. Interacts with host EIF2AK2/PKR; this interaction induces the autophosphorylation of EIF2AK2. Part of the viral assembly initiation complex composed of NS2, E1, E2, NS3, NS4A, NS5A and the mature core protein. Forms a heterodimer with envelope glycoprotein E2. Interacts with mature core protein. Interacts with protease NS2. The heterodimer E1/E2 interacts with host CLDN1; this interaction plays a role in viral entry into host cell. Interacts with host SPSB2 (via C-terminus). Part of the viral assembly initiation complex composed of NS2, E1, E2, NS3, NS4A, NS5A and the mature core protein. In terms of assembly, forms a heterodimer with envelope glycoprotein E1. Interacts with host CD81 and SCARB1 receptors; these interactions play a role in viral entry into host cell. Interacts with host EIF2AK2/PKR; this interaction inhibits EIF2AK2 and probably allows the virus to evade the innate immune response. Interacts with host CD209/DC-SIGN and CLEC4M/DC-SIGNR. Interact with host SPCS1; this interaction is essential for viral particle assembly. Interacts with protease NS2. The heterodimer E1/E2 interacts with host CLDN1; this interaction plays a role in viral entry into host cell. Part of the viral assembly initiation complex composed of NS2, E1, E2, NS3, NS4A, NS5A and the mature core protein. As to quaternary structure, homohexamer. Homoheptamer. Interacts with protease NS2. Homodimer. Interacts with host SPCS1; this interaction is essential for viral particle assembly. Interacts with envelope glycoprotein E1. Interacts with envelope glycoprotein E2. Interacts with viroporin p7. Interacts with serine protease/helicase NS3. Part of the replication complex composed of NS2, NS3, NS4A, NS4B, NS5A and the RNA-directed RNA polymerase embedded in an ER-derived membranous web. Part of the viral assembly initiation complex composed of NS2, E1, E2, NS3, NS4A, NS5A and the mature core protein. Requires Zn(2+) as cofactor. In terms of processing, specific enzymatic cleavages in vivo yield mature proteins. The structural proteins, core, E1, E2 and p7 are produced by proteolytic processing by host signal peptidases. The core protein precursor is synthesized as a 23 kDa, which is retained in the ER membrane through the hydrophobic signal peptide. Cleavage by the signal peptidase releases the 21 kDa mature core protein. The cleavage of the core protein precursor occurs between aminoacids 176 and 188 but the exact cleavage site is not known. Some degraded forms of the core protein appear as well during the course of infection. The other proteins (p7, NS2, NS3, NS4A, NS4B, NS5A and NS5B) are cleaved by the viral proteases. Autoprocessing between NS2 and NS3 is mediated by the NS2 cysteine protease catalytic domain and regulated by the NS3 N-terminal domain. Post-translationally, phosphorylated by host PKC and PKA. Ubiquitinated; mediated by UBE3A and leading to core protein subsequent proteasomal degradation. In terms of processing, highly N-glycosylated. Post-translationally, palmitoylation is required for NS2/3 autoprocessing and E2 recruitment to membranes.

It is found in the host endoplasmic reticulum membrane. The protein resides in the host mitochondrion membrane. The protein localises to the virion. Its subcellular location is the host cytoplasm. It localises to the host nucleus. It is found in the host lipid droplet. The protein resides in the virion membrane. The protein localises to the host mitochondrion. Its subcellular location is the host cell membrane. Inhibited by the antiviral drug hexamethylene amiloride. Inhibition by amantadine appears to be genotype-dependent. Also inhibited by long-alkyl-chain iminosugar derivatives. In terms of biological role, packages viral RNA to form a viral nucleocapsid, and promotes virion budding. Participates in the viral particle production as a result of its interaction with the non-structural protein 5A. Binds RNA and may function as a RNA chaperone to induce the RNA structural rearrangements taking place during virus replication. Modulates viral translation initiation by interacting with viral IRES and 40S ribosomal subunit. Affects various cell signaling pathways, host immunity and lipid metabolism. Prevents the establishment of cellular antiviral state by blocking the interferon-alpha/beta (IFN-alpha/beta) and IFN-gamma signaling pathways and by blocking the formation of phosphorylated STAT1 and promoting ubiquitin-mediated proteasome-dependent degradation of STAT1. Activates STAT3 leading to cellular transformation. Regulates the activity of cellular genes, including c-myc and c-fos. May repress the promoter of p53, and sequester CREB3 and SP110 isoform 3/Sp110b in the cytoplasm. Represses cell cycle negative regulating factor CDKN1A, thereby interrupting an important check point of normal cell cycle regulation. Targets transcription factors involved in the regulation of inflammatory responses and in the immune response: suppresses TNF-induced NF-kappa-B activation, and activates AP-1. Binds to dendritic cells (DCs) via C1QR1, resulting in down-regulation of T-lymphocytes proliferation. Alters lipid metabolism by interacting with hepatocellular proteins involved in lipid accumulation and storage. Induces up-regulation of FAS promoter activity, and thereby contributes to the increased triglyceride accumulation in hepatocytes (steatosis). Forms a heterodimer with envelope glycoprotein E2, which mediates virus attachment to the host cell, virion internalization through clathrin-dependent endocytosis and fusion with host membrane. Fusion with the host cell is most likely mediated by both E1 and E2, through conformational rearrangements of the heterodimer required for fusion rather than a classical class II fusion mechanism. E1/E2 heterodimer binds host apolipoproteins such as APOB and ApoE thereby forming a lipo-viro-particle (LVP). APOE associated to the LVP allows the initial virus attachment to cell surface receptors such as the heparan sulfate proteoglycans (HSPGs), syndecan-1 (SDC1), syndecan-1 (SDC2), the low-density lipoprotein receptor (LDLR) and scavenger receptor class B type I (SCARB1). The cholesterol transfer activity of SCARB1 allows E2 exposure and binding of E2 to SCARB1 and the tetraspanin CD81. E1/E2 heterodimer binding on CD81 activates the epithelial growth factor receptor (EGFR) signaling pathway. Diffusion of the complex E1-E2-EGFR-SCARB1-CD81 to the cell lateral membrane allows further interaction with Claudin 1 (CLDN1) and occludin (OCLN) to finally trigger HCV entry. Functionally, forms a heterodimer with envelope glycoprotein E1, which mediates virus attachment to the host cell, virion internalization through clathrin-dependent endocytosis and fusion with host membrane. Fusion with the host cell is most likely mediated by both E1 and E2, through conformational rearrangements of the heterodimer required for fusion rather than a classical class II fusion mechanism. The interaction between envelope glycoprotein E2 and host apolipoprotein E/APOE allows the proper assembly, maturation and infectivity of the viral particles. This interaction is probably promoted via the up-regulation of cellular autophagy by the virus. E1/E2 heterodimer binds host apolipoproteins such as APOB and APOE thereby forming a lipo-viro-particle (LVP). APOE associated to the LVP allows the initial virus attachment to cell surface receptors such as the heparan sulfate proteoglycans (HSPGs), syndecan-1 (SDC1), syndecan-1 (SDC2), the low-density lipoprotein receptor (LDLR) and scavenger receptor class B type I (SCARB1). The cholesterol transfer activity of SCARB1 allows E2 exposure and binding of E2 to SCARB1 and the tetraspanin CD81. E1/E2 heterodimer binding on CD81 activates the epithelial growth factor receptor (EGFR) signaling pathway. Diffusion of the complex E1-E2-EGFR-SCARB1-CD81 to the cell lateral membrane allows further interaction with Claudin 1 (CLDN1) and occludin (OCLN) to finally trigger HCV entry. Inhibits host EIF2AK2/PKR activation, preventing the establishment of an antiviral state. Viral ligand for CD209/DC-SIGN and CLEC4M/DC-SIGNR, which are respectively found on dendritic cells (DCs), and on liver sinusoidal endothelial cells and macrophage-like cells of lymph node sinuses. These interactions allow the capture of circulating HCV particles by these cells and subsequent facilitated transmission to permissive cells such as hepatocytes and lymphocyte subpopulations. Its function is as follows. Ion channel protein that acts as a viroporin and plays an essential role in the assembly, envelopment and secretion of viral particles. Regulates the host cell secretory pathway, which induces the intracellular retention of viral glycoproteins and favors assembly of viral particles. Creates a pore in acidic organelles and releases Ca(2+) and H(+) in the cytoplasm of infected cells, leading to a productive viral infection. High levels of cytoplasmic Ca(2+) may trigger membrane trafficking and transport of viral ER-associated proteins to viroplasms, sites of viral genome replication. This ionic imbalance induces the assembly of the inflammasome complex, which triggers the maturation of pro-IL-1beta into IL-1beta through the action of caspase-1. Targets also host mitochondria and induces mitochondrial depolarization. In addition of its role as a viroporin, acts as a lipid raft adhesion factor. In terms of biological role, cysteine protease required for the proteolytic auto-cleavage between the non-structural proteins NS2 and NS3. The N-terminus of NS3 is required for the function of NS2 protease (active region NS2-3). Promotes the initiation of viral particle assembly by mediating the interaction between structural and non-structural proteins. In Hepatitis C virus (isolate Glasgow) (HCV), this protein is Genome polyprotein.